Consider the following 508-residue polypeptide: Ras association domain-containing protein 10 (508 aa).

In terms of domain architecture, Ras-associating spans 1–133 (MDPSEKKISV…VRFVLVRSEA (133 aa)). 2 disordered regions span residues 51–81 (RRGLTEDPSGQLELPEPPDENDEDDDDAMPP) and 186–221 (KLNRRRQQQPSSPCSSTSSSTASSCSSSARTHESAS). Residues 66–78 (EPPDENDEDDDDA) show a composition bias toward acidic residues. A compositionally biased stretch (low complexity) spans 195–214 (PSSPCSSTSSSTASSCSSSA). Coiled coils occupy residues 235 to 266 (QDHTIRQQVQRLRELDREIDRYEAKVHLDRMR) and 319 to 358 (LEELARRCDDLVRLQEERAQQEELLERLSAEIQEELNQRW). Positions 473–508 (GLAKSCPGNDEDSDTGLSSMHSQDSDSVPPVCESLV) are disordered. Positions 487–498 (TGLSSMHSQDSD) are enriched in polar residues.

In terms of tissue distribution, expressed in neural progenitor cells (at protein level).

The protein resides in the cytoplasm. It is found in the cytosol. Its subcellular location is the cytoskeleton. It localises to the microtubule organizing center. The protein localises to the centrosome. The protein resides in the spindle pole. Its function is as follows. Plays an important role in regulating embryonic neurogenesis. The chain is Ras association domain-containing protein 10 (Rassf10) from Mus musculus (Mouse).